Here is a 129-residue protein sequence, read N- to C-terminus: Small ribosomal subunit protein uS11c (129 aa).

Belongs to the universal ribosomal protein uS11 family. Part of the 30S ribosomal subunit.

The protein localises to the plastid. It is found in the chloroplast. This chain is Small ribosomal subunit protein uS11c, found in Gracilaria tenuistipitata var. liui (Red alga).